A 488-amino-acid chain; its full sequence is Acetyl-CoA decarbonylase/synthase complex subunit gamma (488 aa).

The 4Fe-4S domain occupies 1 to 61 (MPKKISAMDI…FEKNKKKIIE (61 aa)). Positions 19, 22, 27, and 44 each coordinate [4Fe-4S] cluster.

As to quaternary structure, heterodimer of delta and gamma chains. The ACDS complex is made up of alpha, epsilon, beta, gamma and delta chains with a probable stoichiometry of (alpha(2)epsilon(2))(4)-beta(8)-(gamma(1)delta(1))(8). Corrinoid is required as a cofactor. [4Fe-4S] cluster serves as cofactor.

It carries out the reaction 5,6,7,8-tetrahydrosarcinapterin + methyl-Co(III)-[corrinoid Fe-S protein] = 5-methyltetrahydrosarcinapterin + Co(I)-[corrinoid Fe-S protein] + H(+). Its function is as follows. Part of a complex that catalyzes the reversible cleavage of acetyl-CoA, allowing autotrophic growth from CO(2). The polypeptide is Acetyl-CoA decarbonylase/synthase complex subunit gamma (Methanocaldococcus jannaschii (strain ATCC 43067 / DSM 2661 / JAL-1 / JCM 10045 / NBRC 100440) (Methanococcus jannaschii)).